We begin with the raw amino-acid sequence, 277 residues long: Proteasome subunit beta type-7 (277 aa).

A propeptide spans M1 to G43 (removed in mature form). The active-site Nucleophile is the T44.

Belongs to the peptidase T1B family. In terms of assembly, the 26S proteasome consists of a 20S proteasome core and two 19S regulatory subunits. The 20S proteasome core is a barrel-shaped complex made of 28 subunits that are arranged in four stacked rings. The two outer rings are each formed by seven alpha subunits, and the two inner rings are formed by seven beta subunits. The proteolytic activity is exerted by three beta-subunits PSMB5, PSMB6 and PSMB7. As to quaternary structure, (Microbial infection) Interacts with HIV-1 Tat protein. As to expression, expressed at a low level in colonic mucosa. Up-regulated in colorectal cancer tissues.

The protein localises to the cytoplasm. It localises to the nucleus. The catalysed reaction is Cleavage of peptide bonds with very broad specificity.. Functionally, component of the 20S core proteasome complex involved in the proteolytic degradation of most intracellular proteins. This complex plays numerous essential roles within the cell by associating with different regulatory particles. Associated with two 19S regulatory particles, forms the 26S proteasome and thus participates in the ATP-dependent degradation of ubiquitinated proteins. The 26S proteasome plays a key role in the maintenance of protein homeostasis by removing misfolded or damaged proteins that could impair cellular functions, and by removing proteins whose functions are no longer required. Associated with the PA200 or PA28, the 20S proteasome mediates ubiquitin-independent protein degradation. This type of proteolysis is required in several pathways including spermatogenesis (20S-PA200 complex) or generation of a subset of MHC class I-presented antigenic peptides (20S-PA28 complex). Within the 20S core complex, PSMB7 displays a trypsin-like activity. This Homo sapiens (Human) protein is Proteasome subunit beta type-7.